The following is a 608-amino-acid chain: Albumin 1 (608 aa).

A signal peptide spans methionine 1–serine 14. Residues valine 15–arginine 18 constitute a propeptide that is removed on maturation. Albumin domains lie at serine 19–histidine 205, alanine 206–aspartate 398, and lysine 402–serine 600. Disulfide bonds link cysteine 26–cysteine 72, cysteine 71–cysteine 80, cysteine 93–cysteine 108, cysteine 107–cysteine 118, cysteine 142–cysteine 187, cysteine 186–cysteine 195, cysteine 218–cysteine 264, cysteine 263–cysteine 271, cysteine 283–cysteine 299, cysteine 298–cysteine 309, cysteine 336–cysteine 381, cysteine 380–cysteine 389, cysteine 414–cysteine 460, cysteine 459–cysteine 471, cysteine 484–cysteine 500, cysteine 499–cysteine 510, cysteine 537–cysteine 582, and cysteine 581–cysteine 590. N-linked (GlcNAc...) asparagine glycosylation occurs at asparagine 501.

This sequence belongs to the ALB/AFP/VDB family. As to expression, plasma.

It is found in the secreted. Functionally, binds water, Ca(2+), Na(+), K(+), fatty acids, hormones, bilirubin and drugs. Its main function is the regulation of the colloidal osmotic pressure of blood. The sequence is that of Albumin 1 (alb1) from Salmo salar (Atlantic salmon).